A 260-amino-acid chain; its full sequence is Deoxycytidine kinase (260 aa).

Ser11 and Ser15 each carry phosphoserine; by CK1. Residue 28–36 (GNIAAGKST) coordinates ATP. Position 53 (Glu53) interacts with substrate. A Phosphothreonine; by CK1 modification is found at Thr72. Phosphoserine is present on Ser74. Positions 86 and 97 each coordinate substrate. Residue Glu127 is the Proton acceptor of the active site. The substrate site is built by Arg128 and Asp133. An ATP-binding site is contributed by 188 to 192 (RIYLR). Glu197 contacts substrate. 240 to 242 (EDF) is a binding site for ATP.

This sequence belongs to the DCK/DGK family. In terms of assembly, homodimer. Post-translationally, phosphorylated and activated in vitro upon phosphorylation at Ser-74 by CSNK1D/CK1.

The protein localises to the nucleus. The catalysed reaction is 2'-deoxycytidine + a ribonucleoside 5'-triphosphate = dCMP + a ribonucleoside 5'-diphosphate + H(+). It catalyses the reaction 2'-deoxyadenosine + ATP = dAMP + ADP + H(+). The enzyme catalyses 2'-deoxyguanosine + ATP = dGMP + ADP + H(+). Its function is as follows. Phosphorylates the deoxyribonucleosides deoxycytidine, deoxyguanosine and deoxyadenosine. Has broad substrate specificity, and does not display selectivity based on the chirality of the substrate. It is also an essential enzyme for the phosphorylation of numerous nucleoside analogs widely employed as antiviral and chemotherapeutic agents. The chain is Deoxycytidine kinase (DCK) from Homo sapiens (Human).